An 841-amino-acid chain; its full sequence is Translation initiation factor IF-2 (841 aa).

5 stretches are compositionally biased toward basic and acidic residues: residues 1–12 (MSDNEIKNEAPK), 52–92 (ALKA…EATK), 114–170 (EQPK…REEA), 188–202 (READRDNDRRSEANR), and 213–235 (KKGDREDKNERNADRRNQKDVKG). 2 disordered regions span residues 1–24 (MSDNEIKNEAPKKLSLQRRTKTTV) and 52–246 (ALKA…GSAL). A tr-type G domain is found at 340–510 (TRAPVVTIMG…LLQSEVLELT (171 aa)). The interval 349–356 (GHVDHGKT) is G1. A GTP-binding site is contributed by 349–356 (GHVDHGKT). The tract at residues 374 to 378 (GITQH) is G2. Residues 396–399 (DTPG) are G3. Residues 396-400 (DTPGH) and 450-453 (NKID) contribute to the GTP site. The segment at 450–453 (NKID) is G4. The G5 stretch occupies residues 486–488 (SAK).

It belongs to the TRAFAC class translation factor GTPase superfamily. Classic translation factor GTPase family. IF-2 subfamily.

Its subcellular location is the cytoplasm. Functionally, one of the essential components for the initiation of protein synthesis. Protects formylmethionyl-tRNA from spontaneous hydrolysis and promotes its binding to the 30S ribosomal subunits. Also involved in the hydrolysis of GTP during the formation of the 70S ribosomal complex. The polypeptide is Translation initiation factor IF-2 (Actinobacillus pleuropneumoniae serotype 5b (strain L20)).